Reading from the N-terminus, the 161-residue chain is Cell division protein SepF (161 aa).

Belongs to the SepF family. In terms of assembly, homodimer. Interacts with FtsZ.

The protein localises to the cytoplasm. Its function is as follows. Cell division protein that is part of the divisome complex and is recruited early to the Z-ring. Probably stimulates Z-ring formation, perhaps through the cross-linking of FtsZ protofilaments. Its function overlaps with FtsA. The polypeptide is Cell division protein SepF (Finegoldia magna (strain ATCC 29328 / DSM 20472 / WAL 2508) (Peptostreptococcus magnus)).